The sequence spans 79 residues: UPF0154 protein SAK_1616 (79 aa).

Residues 5–25 form a helical membrane-spanning segment; the sequence is IWILLIIVALFGGLVGGIFIA.

The protein belongs to the UPF0154 family.

It localises to the cell membrane. This Streptococcus agalactiae serotype Ia (strain ATCC 27591 / A909 / CDC SS700) protein is UPF0154 protein SAK_1616.